The chain runs to 297 residues: Aspartate carbamoyltransferase catalytic subunit (297 aa).

Carbamoyl phosphate is bound by residues Arg49 and Thr50. Residue Lys77 participates in L-aspartate binding. Arg99, His129, and Gln132 together coordinate carbamoyl phosphate. Residues Arg162 and Arg215 each coordinate L-aspartate. Carbamoyl phosphate-binding residues include Gly256 and Pro257.

It belongs to the aspartate/ornithine carbamoyltransferase superfamily. ATCase family. In terms of assembly, heterododecamer (2C3:3R2) of six catalytic PyrB chains organized as two trimers (C3), and six regulatory PyrI chains organized as three dimers (R2).

It carries out the reaction carbamoyl phosphate + L-aspartate = N-carbamoyl-L-aspartate + phosphate + H(+). It functions in the pathway pyrimidine metabolism; UMP biosynthesis via de novo pathway; (S)-dihydroorotate from bicarbonate: step 2/3. In terms of biological role, catalyzes the condensation of carbamoyl phosphate and aspartate to form carbamoyl aspartate and inorganic phosphate, the committed step in the de novo pyrimidine nucleotide biosynthesis pathway. The chain is Aspartate carbamoyltransferase catalytic subunit from Legionella pneumophila (strain Lens).